Reading from the N-terminus, the 70-residue chain is Large ribosomal subunit protein bL31 (70 aa).

Zn(2+) contacts are provided by Cys16, Cys18, Cys37, and Cys40.

The protein belongs to the bacterial ribosomal protein bL31 family. Type A subfamily. In terms of assembly, part of the 50S ribosomal subunit. Zn(2+) is required as a cofactor.

Functionally, binds the 23S rRNA. This Shewanella frigidimarina (strain NCIMB 400) protein is Large ribosomal subunit protein bL31.